Consider the following 291-residue polypeptide: uncharacterized protein (291 aa).

The region spanning 2–62 (KEKEKLIIET…SMLNYYYDKT (61 aa)) is the HTH tetR-type domain. The segment at residues 25–44 (SVQEIAKECKISKGAFYIYF) is a DNA-binding region (H-T-H motif).

This is an uncharacterized protein from Bacillus subtilis (strain 168).